The primary structure comprises 147 residues: 18 kDa antigen 1 (147 aa).

The sHSP domain occupies 21 to 131; sequence TPTRPAVMPM…RPRKIAVGAA (111 aa).

Belongs to the small heat shock protein (HSP20) family.

Functionally, not known. This protein is one of the major immune reactive proteins in mycobacteria. The polypeptide is 18 kDa antigen 1 (Mycobacterium avium).